Here is a 479-residue protein sequence, read N- to C-terminus: ATP synthase subunit beta (479 aa).

158 to 165 serves as a coordination point for ATP; that stretch reads GGAGLGKT.

Belongs to the ATPase alpha/beta chains family. In terms of assembly, F-type ATPases have 2 components, CF(1) - the catalytic core - and CF(0) - the membrane proton channel. CF(1) has five subunits: alpha(3), beta(3), gamma(1), delta(1), epsilon(1). CF(0) has three main subunits: a(1), b(2) and c(9-12). The alpha and beta chains form an alternating ring which encloses part of the gamma chain. CF(1) is attached to CF(0) by a central stalk formed by the gamma and epsilon chains, while a peripheral stalk is formed by the delta and b chains.

It is found in the cell inner membrane. It carries out the reaction ATP + H2O + 4 H(+)(in) = ADP + phosphate + 5 H(+)(out). In terms of biological role, produces ATP from ADP in the presence of a proton gradient across the membrane. The catalytic sites are hosted primarily by the beta subunits. The protein is ATP synthase subunit beta of Rhodopirellula baltica (strain DSM 10527 / NCIMB 13988 / SH1).